Here is a 101-residue protein sequence, read N- to C-terminus: Biogenesis of lysosome-related organelles complex 1 subunit BLS1 (101 aa).

It belongs to the BLOC1S1 family. As to quaternary structure, component of the biogenesis of lysosome-related organelles complex-1 (BLOC-1).

Its subcellular location is the endosome. In terms of biological role, component of the biogenesis of lysosome-related organelles complex-1 (BLOC-1), a complex involved in endosomal cargo sorting. The sequence is that of Biogenesis of lysosome-related organelles complex 1 subunit BLS1 (BLS1) from Zygosaccharomyces rouxii (strain ATCC 2623 / CBS 732 / NBRC 1130 / NCYC 568 / NRRL Y-229).